The primary structure comprises 483 residues: NADH-quinone oxidoreductase subunit N (483 aa).

13 consecutive transmembrane segments (helical) span residues 9–29, 35–55, 69–89, 104–124, 158–178, 201–221, 234–254, 272–292, 297–317, 325–345, 368–388, 404–424, and 449–469; these read LVLP…WGAF, PLFT…AVVG, AAAT…IVLG, AVLV…GDLI, FVLG…IYGF, VGLL…VSAA, APTS…MMMF, VLII…LAQT, LWAY…ATGG, LLFM…LQAL, IAVA…FSGF, VLLQ…AFYY, and AVGF…LIWL.

This sequence belongs to the complex I subunit 2 family. NDH-1 is composed of 14 different subunits. Subunits NuoA, H, J, K, L, M, N constitute the membrane sector of the complex.

The protein resides in the cell inner membrane. It catalyses the reaction a quinone + NADH + 5 H(+)(in) = a quinol + NAD(+) + 4 H(+)(out). Its function is as follows. NDH-1 shuttles electrons from NADH, via FMN and iron-sulfur (Fe-S) centers, to quinones in the respiratory chain. The immediate electron acceptor for the enzyme in this species is believed to be ubiquinone. Couples the redox reaction to proton translocation (for every two electrons transferred, four hydrogen ions are translocated across the cytoplasmic membrane), and thus conserves the redox energy in a proton gradient. This chain is NADH-quinone oxidoreductase subunit N, found in Caulobacter sp. (strain K31).